A 530-amino-acid chain; its full sequence is Glutamate--cysteine ligase (530 aa).

This sequence belongs to the glutamate--cysteine ligase type 1 family. Type 1 subfamily.

It carries out the reaction L-cysteine + L-glutamate + ATP = gamma-L-glutamyl-L-cysteine + ADP + phosphate + H(+). The protein operates within sulfur metabolism; glutathione biosynthesis; glutathione from L-cysteine and L-glutamate: step 1/2. The chain is Glutamate--cysteine ligase from Pseudomonas entomophila (strain L48).